The primary structure comprises 436 residues: AP-2 complex subunit mu-B (436 aa).

The region spanning 170–435 is the MHD domain; that stretch reads RNELFLDVLE…IGRSGIYETR (266 aa). A 1,2-diacyl-sn-glycero-3-phospho-(1D-myo-inositol-3,4,5-trisphosphate) is bound by residues K342, K346, and K355.

Belongs to the adaptor complexes medium subunit family. In terms of assembly, adaptor protein complex 2 (AP-2) is a heterotetramer composed of two large adaptins (alpha-type subunit and beta-type subunit), a medium adaptin (mu-type subunit) and a small adaptin (sigma-type subunit).

The protein localises to the cell membrane. Its subcellular location is the membrane. It is found in the coated pit. Functionally, component of the adaptor complexes which link clathrin to receptors in coated vesicles. Clathrin-associated protein complexes are believed to interact with the cytoplasmic tails of membrane proteins, leading to their selection and concentration. AP50 is a subunit of the plasma membrane adaptor. The complex binds polyphosphoinositide-containing lipids. The chain is AP-2 complex subunit mu-B (ap2m1b) from Danio rerio (Zebrafish).